A 130-amino-acid chain; its full sequence is Small ribosomal subunit protein uS9 (130 aa).

The interval arginine 109–arginine 130 is disordered.

This sequence belongs to the universal ribosomal protein uS9 family.

The polypeptide is Small ribosomal subunit protein uS9 (Oleidesulfovibrio alaskensis (strain ATCC BAA-1058 / DSM 17464 / G20) (Desulfovibrio alaskensis)).